A 343-amino-acid polypeptide reads, in one-letter code: Phosphoribosylformylglycinamidine cyclo-ligase (343 aa).

It belongs to the AIR synthase family.

The protein localises to the cytoplasm. The catalysed reaction is 2-formamido-N(1)-(5-O-phospho-beta-D-ribosyl)acetamidine + ATP = 5-amino-1-(5-phospho-beta-D-ribosyl)imidazole + ADP + phosphate + H(+). It participates in purine metabolism; IMP biosynthesis via de novo pathway; 5-amino-1-(5-phospho-D-ribosyl)imidazole from N(2)-formyl-N(1)-(5-phospho-D-ribosyl)glycinamide: step 2/2. The protein is Phosphoribosylformylglycinamidine cyclo-ligase of Thermodesulfovibrio yellowstonii (strain ATCC 51303 / DSM 11347 / YP87).